The chain runs to 89 residues: Small ribosomal subunit protein uS15 (89 aa).

Belongs to the universal ribosomal protein uS15 family. In terms of assembly, part of the 30S ribosomal subunit. Forms a bridge to the 50S subunit in the 70S ribosome, contacting the 23S rRNA.

Functionally, one of the primary rRNA binding proteins, it binds directly to 16S rRNA where it helps nucleate assembly of the platform of the 30S subunit by binding and bridging several RNA helices of the 16S rRNA. In terms of biological role, forms an intersubunit bridge (bridge B4) with the 23S rRNA of the 50S subunit in the ribosome. In Roseobacter denitrificans (strain ATCC 33942 / OCh 114) (Erythrobacter sp. (strain OCh 114)), this protein is Small ribosomal subunit protein uS15.